We begin with the raw amino-acid sequence, 1413 residues long: MKALLDLFKQVQQEEVFDAIKIGLASPDKIRSWSFGEVKKPETINYRTFKPERDGLFCAKIFGPIKDYECLCGKYKRLKHRGVICEKCGVEVTLAKVRRERMGHIELASPVAHIWFLKSLPSRLGMVLDMTLRDIERVLYFEAYVVIDPGMTPLKARQIMTEEDYYNKVEEYGDEFRAEMGAEGVRELLRAINIDEQVETLRSELKNTGSEAKIKKYAKRLKVLEAFQRSGIKPEWMILEVLPVLPPELRPLVPLDGGRFATSDLNDLYRRVINRNNRLKRLLELKAPEIIVRNEKRMLQEAVDSLLDNGRRGKAMTGANKRPLKSLADMIKGKGGRFRQNLLGKRVDYSGRSVIVVGPTLKLHQCGLPKLMALELFKPFIFNKLEVMGVATTIKAAKKEVENQTPVVWDILEEVIREHPVMLNRAPTLHRLGIQAFEPVLIEGKAIQLHPLVCAAFNADFDGDQMAVHVPLSLEAQMEARTLMLASNNVLFPANGDPSIVPSQDIVLGLYYATREAINGKGEGMTFTGVSEVLRAYENKEVELASRVNVRITEMVHNEDKSEGAPAFVPKISLYATTVGRSILSEILPPGLPFSVLNKPLKKKEISRLINTAFRKCGLRETVIFADQLMQSGFRLATRAGISICVDDMLVPPQKETIVGDAAKKVKEYDRQYMSGLVTAQERYNNVVDIWSATSEAVGKAMMEQLSTEPVTDRDGNETRQESFNSIYMMADSGARGSAVQIRQLAGMRGLMAKPDGSIIETPITANFREGLNVLQYFISTHGARKGLADTALKTANSGYLTRRLVDVTQDLVVVEDDCGTSQGVAMKALVEGGEVVEALRDRILGRVAVADVVNPETQETLYESGTLLDESAVEEIERLGIDEVRVRTPLTCETRYGLCASCYGRDLGRGSLVNVGEAVGVIAAQSIGEPGTQLTMRTFHIGGAASRAAVASSVEAKSNGTVRFTATMRYVTNAKGEQIVISRSGEALITDDHGRERERHKVPYGATLLQLDGAQIKAGTQLATWDPLTRPIITEWGGTVKFENVEEGVTVAKQIDDVTGLSTLVVIDAKRRGSQSSKSVRPQVKLLDANGEEVKIPNSEHSVQIGFQVGALITVKDGQQVQVGEVLARIPTEAQKTRDITGGLPRVAELFEARSPKDAGILAEVTGTTSFGKDTKGKQRLVITDLEGNQHEFLIAKEKQVLVHDGQVVNKGEMIVDGPADPHDILRLQGIEALSRYIVDEVQDVYRLQGVKINDKHIEVIVRQMLRRVQITDNGDTRFIPGEQVERSDMLDENDRMNAEDKRPATYENILLGITKASLSTDSFISAASFQETTRVLTEAAIMGKRDDLRGLKENVIVGRLIPAGTGLAFHKARKTKEMADRERFDQIAAEEAFEFGTPETPAAEQTPHTNE.

Residues Cys-70, Cys-72, Cys-85, and Cys-88 each contribute to the Zn(2+) site. Positions 460, 462, and 464 each coordinate Mg(2+). Zn(2+) contacts are provided by Cys-819, Cys-893, Cys-900, and Cys-903. The interval 1393-1413 is disordered; it reads EAFEFGTPETPAAEQTPHTNE.

This sequence belongs to the RNA polymerase beta' chain family. In terms of assembly, the RNAP catalytic core consists of 2 alpha, 1 beta, 1 beta' and 1 omega subunit. When a sigma factor is associated with the core the holoenzyme is formed, which can initiate transcription. The cofactor is Mg(2+). Requires Zn(2+) as cofactor.

The catalysed reaction is RNA(n) + a ribonucleoside 5'-triphosphate = RNA(n+1) + diphosphate. Its function is as follows. DNA-dependent RNA polymerase catalyzes the transcription of DNA into RNA using the four ribonucleoside triphosphates as substrates. This is DNA-directed RNA polymerase subunit beta' from Paraburkholderia phymatum (strain DSM 17167 / CIP 108236 / LMG 21445 / STM815) (Burkholderia phymatum).